We begin with the raw amino-acid sequence, 1061 residues long: Carbamoyl phosphate synthase large chain (1061 aa).

The tract at residues 1-401 (MPKRTDVHKI…ALQKAVRSLE (401 aa)) is carboxyphosphate synthetic domain. ATP is bound by residues arginine 129, arginine 169, glycine 175, glycine 176, lysine 208, isoleucine 210, glutamate 215, glycine 241, isoleucine 242, histidine 243, glutamine 284, and glutamate 298. One can recognise an ATP-grasp 1 domain in the interval 133 to 327 (KDLMQELNEP…IAKLAAKIAV (195 aa)). Residues glutamine 284, glutamate 298, and asparagine 300 each contribute to the Mg(2+) site. Mn(2+) is bound by residues glutamine 284, glutamate 298, and asparagine 300. The oligomerization domain stretch occupies residues 402-546 (IDEKDLISAK…YSSYDLENES (145 aa)). The segment at 547–929 (KKSDKKSVLV…ALYKAFTGAK (383 aa)) is carbamoyl phosphate synthetic domain. An ATP-grasp 2 domain is found at 671 to 861 (DQTIKNLGLK…MAQVATRVIL (191 aa)). Arginine 707, alanine 746, leucine 748, glutamate 752, glycine 777, valine 778, histidine 779, serine 780, glutamine 820, and glutamate 832 together coordinate ATP. Residues glutamine 820, glutamate 832, and asparagine 834 each contribute to the Mg(2+) site. The Mn(2+) site is built by glutamine 820, glutamate 832, and asparagine 834. An MGS-like domain is found at 930–1061 (MELPDNGNVL…ENRSFATNSL (132 aa)). The segment at 930 to 1061 (MELPDNGNVL…ENRSFATNSL (132 aa)) is allosteric domain.

The protein belongs to the CarB family. Composed of two chains; the small (or glutamine) chain promotes the hydrolysis of glutamine to ammonia, which is used by the large (or ammonia) chain to synthesize carbamoyl phosphate. Tetramer of heterodimers (alpha,beta)4. Requires Mg(2+) as cofactor. It depends on Mn(2+) as a cofactor.

The enzyme catalyses hydrogencarbonate + L-glutamine + 2 ATP + H2O = carbamoyl phosphate + L-glutamate + 2 ADP + phosphate + 2 H(+). It catalyses the reaction hydrogencarbonate + NH4(+) + 2 ATP = carbamoyl phosphate + 2 ADP + phosphate + 2 H(+). It functions in the pathway amino-acid biosynthesis; L-arginine biosynthesis; carbamoyl phosphate from bicarbonate: step 1/1. The protein operates within pyrimidine metabolism; UMP biosynthesis via de novo pathway; (S)-dihydroorotate from bicarbonate: step 1/3. Its function is as follows. Large subunit of the glutamine-dependent carbamoyl phosphate synthetase (CPSase). CPSase catalyzes the formation of carbamoyl phosphate from the ammonia moiety of glutamine, carbonate, and phosphate donated by ATP, constituting the first step of 2 biosynthetic pathways, one leading to arginine and/or urea and the other to pyrimidine nucleotides. The large subunit (synthetase) binds the substrates ammonia (free or transferred from glutamine from the small subunit), hydrogencarbonate and ATP and carries out an ATP-coupled ligase reaction, activating hydrogencarbonate by forming carboxy phosphate which reacts with ammonia to form carbamoyl phosphate. The chain is Carbamoyl phosphate synthase large chain from Ligilactobacillus salivarius (strain UCC118) (Lactobacillus salivarius).